The following is a 427-amino-acid chain: MWEHVKKVDPEIYEVLVNELRRQEYGLELIASENFASLAVIETMGSVLTNKYAEGYPGRRYYGGCEWVDRAEELAIERAKKLFGAEFANVQPHSGSQANMAVYLALAQPGDTIMGMSLSHGGHLTHGAPVNFSGRIFKVVHYGVNLETETIDYDEVRKLALEHRPKIIVAGGSAYARTIDFKRFREIADEVGAYLMVDMAHFAGLVAAGIHPNPVEYAHVVTSTTHKTLRGPRGGLILTNDPEIAKAVDKTIFPGIQGGPLMHVIAAKAVCFKEAMSEEFREYQKQVVKNAKKMAEEMKKRGYRIVSGGTDTHLFLVDLTPKDITGKAAEKALESCGITVNKNTIPNEKRSPFVASGIRIGTPAVTTRGMKEKEMEEIVELIDYVLSSITDEKGTVRPEVREEVTRRVRKLCEMFPLYRDKIEGVEI.

Residues leucine 118 and 122 to 124 contribute to the (6S)-5,6,7,8-tetrahydrofolate site; that span reads GHL. N6-(pyridoxal phosphate)lysine is present on lysine 227. (6S)-5,6,7,8-tetrahydrofolate-binding positions include glutamate 243 and 351-353; that span reads SPF.

This sequence belongs to the SHMT family. In terms of assembly, homodimer. The cofactor is pyridoxal 5'-phosphate.

The protein resides in the cytoplasm. The enzyme catalyses (6R)-5,10-methylene-5,6,7,8-tetrahydrofolate + glycine + H2O = (6S)-5,6,7,8-tetrahydrofolate + L-serine. The protein operates within one-carbon metabolism; tetrahydrofolate interconversion. It participates in amino-acid biosynthesis; glycine biosynthesis; glycine from L-serine: step 1/1. Functionally, catalyzes the reversible interconversion of serine and glycine with tetrahydrofolate (THF) serving as the one-carbon carrier. This reaction serves as the major source of one-carbon groups required for the biosynthesis of purines, thymidylate, methionine, and other important biomolecules. Also exhibits THF-independent aldolase activity toward beta-hydroxyamino acids, producing glycine and aldehydes, via a retro-aldol mechanism. The sequence is that of Serine hydroxymethyltransferase from Thermotoga neapolitana (strain ATCC 49049 / DSM 4359 / NBRC 107923 / NS-E).